A 321-amino-acid polypeptide reads, in one-letter code: G-protein coupled receptor aex-2 (321 aa).

At 1–24 (MNSTDIIANVTKPFVENLTLGETA) the chain is on the extracellular side. N-linked (GlcNAc...) asparagine glycosylation is found at Asn2, Asn9, and Asn17. A helical membrane pass occupies residues 25-45 (FYISCGIVGTVFNALVLWIAL). Residues 46–55 (TYINTEDKPR) are Cytoplasmic-facing. A helical transmembrane segment spans residues 56-76 (QIIVINMTVADLLMCIVYMKT). The Extracellular segment spans residues 77–90 (RPWLSHFNLWLCHP). Cysteines 88 and 161 form a disulfide. The chain crosses the membrane as a helical span at residues 91–111 (YYVIIWTCQMCSCLNLVWLNV). The Cytoplasmic segment spans residues 112-132 (DKLIYIQFPLHYYQIVNRKRL). A helical membrane pass occupies residues 133–153 (LWITAATWGGLYAMNIALVTF). Residues 154–175 (LKITRGSCLGVSLNPYVYLLSP) are Extracellular-facing. The helical transmembrane segment at 176–196 (IFYVVMILTSFSLSALIYCIA) threads the bilayer. The Cytoplasmic segment spans residues 197–221 (HNLTHMEERQRSKLFRRLFFLFSST). The chain crosses the membrane as a helical span at residues 222–242 (LWTFFTCLPYRLLYLFSIFCG). The Extracellular portion of the chain corresponds to 243–254 (ETCQINNYYKTA). Residues 255–275 (TNLFFRLLIVGIMINPVITIW) traverse the membrane as a helical segment. Residues 276–321 (TQRIYRLRLMRMFGRLRENSSTEVLMVSNRRASERPPEHTPLRCDM) lie on the Cytoplasmic side of the membrane.

It belongs to the G-protein coupled receptor 1 family. As to expression, expressed in the intestinal muscle, anal depressor, AVL and DVB GABAergic neurons, enteric muscles, the nerve ring, the ventral nerve cord and head mesodermal cells.

It is found in the cell membrane. The protein localises to the cell projection. It localises to the cilium. G-protein coupled receptor for the nlp-40 neuropeptide. The activity of this receptor is mediated by G proteins which activate adenylyl cyclase. Plays a role in the defecation motor program, which is a coordinated series of three muscle contractions that occurs every 45 seconds. Specifically, acts in GABAergic neurons, such as AVL and DVB, to control the expulsion step of defecation. Required for fatty acid uptake and metabolism by intestinal cells and therefore regulates the levels of triglycerides in the intestine. The protein is G-protein coupled receptor aex-2 of Caenorhabditis elegans.